A 416-amino-acid polypeptide reads, in one-letter code: Serine hydroxymethyltransferase (416 aa).

(6S)-5,6,7,8-tetrahydrofolate contacts are provided by residues leucine 121 and 125 to 127; that span reads GHL. The residue at position 229 (lysine 229) is an N6-(pyridoxal phosphate)lysine.

It belongs to the SHMT family. Homodimer. Pyridoxal 5'-phosphate is required as a cofactor.

It localises to the cytoplasm. It catalyses the reaction (6R)-5,10-methylene-5,6,7,8-tetrahydrofolate + glycine + H2O = (6S)-5,6,7,8-tetrahydrofolate + L-serine. It participates in one-carbon metabolism; tetrahydrofolate interconversion. Its pathway is amino-acid biosynthesis; glycine biosynthesis; glycine from L-serine: step 1/1. Catalyzes the reversible interconversion of serine and glycine with tetrahydrofolate (THF) serving as the one-carbon carrier. This reaction serves as the major source of one-carbon groups required for the biosynthesis of purines, thymidylate, methionine, and other important biomolecules. Also exhibits THF-independent aldolase activity toward beta-hydroxyamino acids, producing glycine and aldehydes, via a retro-aldol mechanism. The polypeptide is Serine hydroxymethyltransferase (Neisseria meningitidis serogroup B (strain ATCC BAA-335 / MC58)).